A 463-amino-acid polypeptide reads, in one-letter code: Glucagon-like peptide 1 receptor (463 aa).

The N-terminal stretch at 1–21 is a signal peptide; the sequence is MASTPSLLRLALLLLGAVGRA. The Extracellular portion of the chain corresponds to 22–139; it reads GPRPQGTTVS…KRGERNFPEE (118 aa). Cystine bridges form between cysteine 46-cysteine 71, cysteine 62-cysteine 104, and cysteine 85-cysteine 126. N-linked (GlcNAc...) asparagine glycosylation is found at asparagine 63, asparagine 82, and asparagine 115. A helical membrane pass occupies residues 140–164; sequence QLLSLYIIYTVGYALSFSALVIASA. Over 165 to 175 the chain is Cytoplasmic; sequence ILVGFRHLHCT. The chain crosses the membrane as a helical span at residues 176-201; it reads RNYIHLNLFASFILRALSVFIKDAAL. Residues 202-227 are Extracellular-facing; sequence KWMYSTAAQQHQWDGLLSYQDSLGCR. An intrachain disulfide couples cysteine 226 to cysteine 296. A helical transmembrane segment spans residues 228 to 251; it reads LVFLLMQYCVAANYYWLLVEGVYL. Residues 252–265 lie on the Cytoplasmic side of the membrane; sequence YTLLAFSVFSEQRI. The chain crosses the membrane as a helical span at residues 266–290; that stretch reads FKLYLSIGWGVPLLFVIPWGIVKYL. The Extracellular segment spans residues 291-305; it reads YEDEGCWTRNSNMNY. Residues 306-328 traverse the membrane as a helical segment; it reads WLIIRLPILFAIGVNFLIFIRVI. Residues 329–348 are Cytoplasmic-facing; that stretch reads CIVVSKLKANLMCKTDIKCR. Residue cysteine 341 is modified to ADP-ribosylcysteine. Arginine 348 is subject to ADP-ribosylarginine. The helical transmembrane segment at 349–370 threads the bilayer; it reads LAKSTLTLIPLLGTHEVIFAFV. Residues 352–355 form an important for allosteric inhibitor binding region; it reads STLT. Residues 371 to 383 lie on the Extracellular side of the membrane; sequence MDEHARGTLRFIK. The helical transmembrane segment at 384-404 threads the bilayer; sequence LFTELSFTSFQGLMVAILYCF. The Cytoplasmic portion of the chain corresponds to 405–463; sequence VNNEVQMEFRKCWERWRLEHLNIQRDCSMKPLKCPTSSVSSGATVGSSVYAATCQSSYS.

This sequence belongs to the G-protein coupled receptor 2 family. In terms of assembly, may form homodimers and heterodimers with GIPR. Post-translationally, N-glycosylation enhances cell surface expression and lengthens receptor half-life by preventing degradation in the ER. In terms of tissue distribution, detected in pancreatic islets (at protein level). Detected in pancreatic islets and lungs.

The protein localises to the cell membrane. Functionally, G-protein coupled receptor for glucagon-like peptide 1 (GLP-1). Ligand binding triggers activation of a signaling cascade that leads to the activation of adenylyl cyclase and increased intracellular cAMP levels. Plays a role in regulating insulin secretion in response to GLP-1. The polypeptide is Glucagon-like peptide 1 receptor (Glp1r) (Mus musculus (Mouse)).